Here is a 600-residue protein sequence, read N- to C-terminus: NADH-quinone oxidoreductase subunit C/D (600 aa).

An NADH dehydrogenase I subunit C region spans residues 1–190; sequence MVNNMTDLTA…SPFELTKAKQ (190 aa). The segment at 214–600 is NADH dehydrogenase I subunit D; sequence DFMFLNLGPN…IDFVMSDVDR (387 aa).

In the N-terminal section; belongs to the complex I 30 kDa subunit family. This sequence in the C-terminal section; belongs to the complex I 49 kDa subunit family. In terms of assembly, NDH-1 is composed of 13 different subunits. Subunits NuoB, CD, E, F, and G constitute the peripheral sector of the complex.

The protein localises to the cell inner membrane. It carries out the reaction a quinone + NADH + 5 H(+)(in) = a quinol + NAD(+) + 4 H(+)(out). NDH-1 shuttles electrons from NADH, via FMN and iron-sulfur (Fe-S) centers, to quinones in the respiratory chain. The immediate electron acceptor for the enzyme in this species is believed to be ubiquinone. Couples the redox reaction to proton translocation (for every two electrons transferred, four hydrogen ions are translocated across the cytoplasmic membrane), and thus conserves the redox energy in a proton gradient. In Escherichia coli O6:H1 (strain CFT073 / ATCC 700928 / UPEC), this protein is NADH-quinone oxidoreductase subunit C/D.